We begin with the raw amino-acid sequence, 95 residues long: Large ribosomal subunit protein uL23 (95 aa).

Belongs to the universal ribosomal protein uL23 family. Part of the 50S ribosomal subunit. Contacts protein L29, and trigger factor when it is bound to the ribosome.

In terms of biological role, one of the early assembly proteins it binds 23S rRNA. One of the proteins that surrounds the polypeptide exit tunnel on the outside of the ribosome. Forms the main docking site for trigger factor binding to the ribosome. The sequence is that of Large ribosomal subunit protein uL23 from Fusobacterium nucleatum subsp. nucleatum (strain ATCC 25586 / DSM 15643 / BCRC 10681 / CIP 101130 / JCM 8532 / KCTC 2640 / LMG 13131 / VPI 4355).